A 686-amino-acid polypeptide reads, in one-letter code: Endonuclease GajA (686 aa).

Residues 1-423 (MYLKSLKIYN…NYVTTKNNYT (423 aa)) form an ATPase domain region. 52-56 (NCGKT) provides a ligand contact to ATP. The interval 463 to 599 (FFSDAIIFVE…TSFEEAFILT (137 aa)) is toprim domain. Positions 472, 476, 559, and 604 each coordinate a divalent metal cation.

As to quaternary structure, homotetramer. Forms the core of the anti-phage defense complex. Interacts with GajB; 2 GajB dimers dock at opposite sides of the GajA complex to form a 4:4 GajA-GajB assembly (GajAB). GajAB interacts with Bacillus phage Phi3T Gad1 protein; this interaction forms a 4:4:8 GajAB-Gad1 complex and leads to GajAB inhibition. Mg(2+) is required as a cofactor.

Functionally, component of antiviral defense system Gabija type II, composed of GajA and GajB. Probably a nicking endonuclease that is strongly inhibited by physiological levels of nucleotides (NTP and dNTP). Expression of Gabija type II in B.subtilis (strain BEST7003) confers resistance to phages phi105, and SpBeta. During viral replication, when nucleotides are rapidly consumed, it is de-suppressed and degrades target DNA. This Bacillus cereus (strain HuB5-5) protein is Endonuclease GajA.